Reading from the N-terminus, the 315-residue chain is MNSVIFLGTPQFGATVLEGLIKAGYHILAVVTQPDKKVGRKQKVVYSPVKEVALANDLPLYQPVRLSKSDELDELLQLDADFIITAAFGQFLPTKFLKSAKIAAVNVHGSLLPKYRGGAPIQYAVRNGDAETGVTIMEMVKEMDAGDMYAQASLPIRPDETSGEVFEELAPLGRDLLLETLPKIASGEIVKKPQDPSQVVFSPTISKAEERISLKLTAKEAKNLIRALNPDPGAYLVIKGQRLKVWKAEVADDNTSLPAGHLLTNQGRFAISFAGNTVLNLLEVQPNGKKAMAIKDFLNGQGKKFAAGEKIVDED.

110 to 113 contacts (6S)-5,6,7,8-tetrahydrofolate; that stretch reads SLLP.

The protein belongs to the Fmt family.

It catalyses the reaction L-methionyl-tRNA(fMet) + (6R)-10-formyltetrahydrofolate = N-formyl-L-methionyl-tRNA(fMet) + (6S)-5,6,7,8-tetrahydrofolate + H(+). In terms of biological role, attaches a formyl group to the free amino group of methionyl-tRNA(fMet). The formyl group appears to play a dual role in the initiator identity of N-formylmethionyl-tRNA by promoting its recognition by IF2 and preventing the misappropriation of this tRNA by the elongation apparatus. The sequence is that of Methionyl-tRNA formyltransferase from Lactobacillus delbrueckii subsp. bulgaricus (strain ATCC BAA-365 / Lb-18).